We begin with the raw amino-acid sequence, 180 residues long: Nascent polypeptide-associated complex subunit alpha (180 aa).

The NAC-A/B domain occupies 16-80 (SKNEKKAREL…AKVDDMNKRI (65 aa)). Positions 81–113 (AEAQQQQAQQDALSKAAGETGEAGEEDKSQDAI) are disordered. The span at 82–100 (EAQQQQAQQDALSKAAGET) shows a compositional bias: low complexity. Positions 142-179 (LDAKDIDIIVEQTQVSRAKAVKALRVHDGDMVNAIMEL) constitute a UBA domain.

It belongs to the NAC-alpha family. As to quaternary structure, part of the nascent polypeptide-associated complex (NAC), consisting of EGD2 and EGD1. NAC associates with ribosomes via EGD1.

The protein resides in the cytoplasm. It is found in the nucleus. Component of the nascent polypeptide-associated complex (NAC), a dynamic component of the ribosomal exit tunnel, protecting the emerging polypeptides from interaction with other cytoplasmic proteins to ensure appropriate nascent protein targeting. The NAC complex also promotes mitochondrial protein import by enhancing productive ribosome interactions with the outer mitochondrial membrane and blocks the inappropriate interaction of ribosomes translating non-secretory nascent polypeptides with translocation sites in the membrane of the endoplasmic reticulum. EGD2 may also be involved in transcription regulation. This Debaryomyces hansenii (strain ATCC 36239 / CBS 767 / BCRC 21394 / JCM 1990 / NBRC 0083 / IGC 2968) (Yeast) protein is Nascent polypeptide-associated complex subunit alpha (EGD2).